A 500-amino-acid chain; its full sequence is LEM protein 2 (500 aa).

An LEM domain is found at 1–45 (MVDVEKMSDAELRAELNVRGANVGPVTGTTRSLYEKKLKKLLSGG). The Nuclear segment spans residues 1-325 (MVDVEKMSDA…VKQTNIFNEA (325 aa)). A disordered region spans residues 39–202 (KKLLSGGAKT…RRITSVPGLI (164 aa)). A compositionally biased stretch (low complexity) spans 46 to 57 (AKTPARPTVAKP). The span at 58-75 (APKPTPKSAPAPKSPKSP) shows a compositional bias: pro residues. Positions 77-89 (ARRSIPRAAATAA) are enriched in low complexity. The segment covering 103–122 (EEMSDSDDDMRDDDDDDEEI) has biased composition (acidic residues). 2 stretches are compositionally biased toward low complexity: residues 130 to 141 (SSFRSANSTASS) and 168 to 197 (NTPR…RITS). A helical transmembrane segment spans residues 326–346 (IYFALYVILILFVVLGIAYAL). At 347 to 378 (TTTHRPKTADFSGYWGVLKAAGRDSLNFFYNY) the chain is on the perinuclear space side. Residues 379–399 (AILPVVSLGIFVVLGAGIYFG) form a helical membrane-spanning segment. Residues 400–500 (HRKYKEAKEQ…WIGNQSQKRW (101 aa)) are Nuclear-facing.

Interacts with lmn-1. Interacts (via LEM domain and the C-terminal nuclear domain) with baf-1. Ubiquitous. High expression in germline and intestine.

Its subcellular location is the nucleus inner membrane. It is found in the nucleus envelope. The protein resides in the chromosome. Functionally, nuclear lamina-associated inner nuclear membrane protein that is involved in cell division, nuclear structure organization, maintenance of nuclear envelope integrity and nuclear envelope reformation after mitosis. In interphase cells, plays a role in anchoring and spatial arrangement of chromosome arms at the nuclear periphery, forming so-called lem-2 subdomains. Both arms of autosomes but only the left arm of the X chromosome are anchored in lem-2 subdomains; sequences bound by lem-2 are mainly repetitive chromosome sequences and inactive genes. Involved in chromosome segregation and cell division, probably via its interaction with the nuclear intermediate filament protein lmn-1, the main component of nuclear lamina. Required to organize the distribution of lmn-1, nuclear pore complexes (NPCs) and chromatin in mitotically active cells. Involved in the nuclear positioning and efficient anchoring of microtubule-organizing centers (MTOCs) to the nuclear envelope during mitosis as well as on maintaining correct nuclear morphology. Contributes to closure of nuclear envelope (NE) holes and prevents excess nuclear membranes after meiosis and mitosis. Together with emr-1, plays a role in baf-1 enrichment at the nuclear envelope in anaphase. Together with emr-1, involved in muscle cell attachment to hypodermal cells, as well as muscle cell location and sarcomere organization. May play a role in radiation-induced DNA damage repair response. The protein is LEM protein 2 (lem-2) of Caenorhabditis elegans.